The following is a 474-amino-acid chain: Trehalose-6-phosphate synthase (474 aa).

R10 provides a ligand contact to D-glucose 6-phosphate. 22-23 provides a ligand contact to UDP-alpha-D-glucose; it reads GG. D-glucose 6-phosphate contacts are provided by Y77 and D131. Residues R263 and K268 each coordinate UDP-alpha-D-glucose. Residue R301 participates in D-glucose 6-phosphate binding. UDP-alpha-D-glucose is bound by residues F340 and 366-370; that span reads LVAKE.

Belongs to the glycosyltransferase 20 family. As to quaternary structure, homotetramer.

It carries out the reaction D-glucose 6-phosphate + UDP-alpha-D-glucose = alpha,alpha-trehalose 6-phosphate + UDP + H(+). Its pathway is glycan biosynthesis; trehalose biosynthesis. Functionally, probably involved in the osmoprotection via the biosynthesis of trehalose. Catalyzes the transfer of glucose from UDP-alpha-D-glucose (UDP-Glc) to D-glucose 6-phosphate (Glc-6-P) to form trehalose-6-phosphate. Acts with retention of the anomeric configuration of the UDP-sugar donor. This is Trehalose-6-phosphate synthase from Escherichia coli O9:H4 (strain HS).